Reading from the N-terminus, the 148-residue chain is Snaclec 6 (148 aa).

A signal peptide spans 1-23 (MGRFIFVSFGLLVMFLSLSGTEA). Cystine bridges form between Cys-27–Cys-38, Cys-55–Cys-144, and Cys-121–Cys-136. Residues 34–145 (YDQNCYKAFE…CSGTHNFVCK (112 aa)) form the C-type lectin domain. A glycan (N-linked (GlcNAc...) asparagine) is linked at Asn-130.

This sequence belongs to the snaclec family. As to quaternary structure, heterodimer; disulfide-linked. As to expression, expressed by the venom gland.

Its subcellular location is the secreted. Functionally, interferes with one step of hemostasis (modulation of platelet aggregation, or coagulation cascade, for example). The protein is Snaclec 6 of Bitis arietans (African puff adder).